The following is a 424-amino-acid chain: Poly-cysteine and histidine-tailed protein (424 aa).

The N-terminal stretch at 1–17 is a signal peptide; that stretch reads MAFSTIVVLFVAAVGFG. A glycan (N-linked (GlcNAc...) asparagine) is linked at Asn291. A compositionally biased stretch (basic and acidic residues) spans 372–390; sequence VGGKKQQKDQPESEKKAEN. Residues 372-424 form a disordered region; the sequence is VGGKKQQKDQPESEKKAENMPETTGNASHHQHRHHHGDSSSESHEQHHHHHHH. Residue Asn397 is glycosylated (N-linked (GlcNAc...) asparagine).

In terms of processing, glycosylated. In terms of tissue distribution, expressed in larval tissues like cuticle, hypodermis and muscle (at protein level). Note=Not excreted into striated muscle fibers or nurse cell.

The protein resides in the secreted. Binds iron and zinc. May bind nickel. The sequence is that of Poly-cysteine and histidine-tailed protein from Trichinella spiralis (Trichina worm).